The sequence spans 408 residues: NADH-quinone oxidoreductase subunit D (408 aa).

It belongs to the complex I 49 kDa subunit family. NDH-1 is composed of 14 different subunits. Subunits NuoB, C, D, E, F, and G constitute the peripheral sector of the complex.

It is found in the cell inner membrane. It catalyses the reaction a quinone + NADH + 5 H(+)(in) = a quinol + NAD(+) + 4 H(+)(out). Its function is as follows. NDH-1 shuttles electrons from NADH, via FMN and iron-sulfur (Fe-S) centers, to quinones in the respiratory chain. The immediate electron acceptor for the enzyme in this species is believed to be ubiquinone. Couples the redox reaction to proton translocation (for every two electrons transferred, four hydrogen ions are translocated across the cytoplasmic membrane), and thus conserves the redox energy in a proton gradient. The polypeptide is NADH-quinone oxidoreductase subunit D (Campylobacter jejuni subsp. jejuni serotype O:2 (strain ATCC 700819 / NCTC 11168)).